Here is a 100-residue protein sequence, read N- to C-terminus: Urease subunit gamma (100 aa).

This sequence belongs to the urease gamma subunit family. In terms of assembly, heterotrimer of UreA (gamma), UreB (beta) and UreC (alpha) subunits. Three heterotrimers associate to form the active enzyme.

It localises to the cytoplasm. The catalysed reaction is urea + 2 H2O + H(+) = hydrogencarbonate + 2 NH4(+). It functions in the pathway nitrogen metabolism; urea degradation; CO(2) and NH(3) from urea (urease route): step 1/1. This chain is Urease subunit gamma, found in Mycobacteroides abscessus (strain ATCC 19977 / DSM 44196 / CCUG 20993 / CIP 104536 / JCM 13569 / NCTC 13031 / TMC 1543 / L948) (Mycobacterium abscessus).